The sequence spans 975 residues: 26S proteasome non-ATPase regulatory subunit 1 (975 aa).

The segment at 272–303 (EKKSTTTTTTTPASDSMEIDIDSGNEKSGGSS) is disordered. 10 PC repeats span residues 393–426 (SAIS…NQTP), 431–464 (GSLY…ILHH), 465–499 (GASL…VSGE), 500–534 (AAGL…EKTI), 536–569 (SLSM…LIRY), 570–605 (GGMY…SVRR), 606–638 (AAVT…PHVR), 640–674 (GAAF…YVKQ), 675–715 (AAWI…DSMS), and 718–748 (GAVL…NMNA). 2 disordered regions span residues 832–882 (SSRS…KSNP) and 922–975 (PEQL…EFTE). 2 stretches are compositionally biased toward basic and acidic residues: residues 842 to 880 (DVEK…ERKS) and 926 to 935 (VVKEKPETKQ). The span at 944–961 (TATATASLPNATTTTSPT) shows a compositional bias: low complexity.

It belongs to the proteasome subunit S1 family.

Functionally, acts as a regulatory subunit of the 26 proteasome which is involved in the ATP-dependent degradation of ubiquitinated proteins. The sequence is that of 26S proteasome non-ATPase regulatory subunit 1 (psmD1) from Dictyostelium discoideum (Social amoeba).